Here is a 1121-residue protein sequence, read N- to C-terminus: Anillin (1121 aa).

Methionine 1 is modified (N-acetylmethionine). Residues 1–25 (MDPFTEKLLERTRARRENLQRKMAE) show a composition bias toward basic and acidic residues. The tract at residues 1–45 (MDPFTEKLLERTRARRENLQRKMAERPTAVARSAPHAKRGREPLS) is required for ubiquitination. 3 disordered regions span residues 1–113 (MDPF…AAIS), 125–196 (ADRG…PVGR), and 212–402 (DDVS…TKAI). Positions 1-154 (MDPFTEKLLE…MQRLAEQRRH (154 aa)) are interaction with CD2AP. Residues 1–228 (MDPFTEKLLE…AKQNSVQEQP (228 aa)) are nuclear localization. 2 positions are modified to phosphoserine: serine 73 and serine 96. The span at 96-109 (SPMPAPRQAKPPAP) shows a compositional bias: pro residues. Positions 130–143 (NSGSEASATSSVKT) are enriched in polar residues. Over residues 147–157 (RLAEQRRHWDS) the composition is skewed to basic and acidic residues. Residue serine 180 is modified to Phosphoserine. A Phosphothreonine modification is found at threonine 192. Residues 216-228 (HSSAKQNSVQEQP) show a composition bias toward polar residues. Residues serine 223, serine 250, and serine 259 each carry the phosphoserine modification. Positions 229–671 (GTACLSKSSS…RDLLYSIDAY (443 aa)) are interaction with F-actin. Low complexity predominate over residues 234–250 (SKSSSASGASASINSSS). Residues 282–298 (SASVSSSVKASSPVTAA) are compositionally biased toward low complexity. Residues 303–314 (ENREAQNPELLH) are compositionally biased toward basic and acidic residues. A Phosphothreonine modification is found at threonine 316. Residues serine 318 and serine 334 each carry the phosphoserine modification. Position 359 is a phosphothreonine (threonine 359). Position 366 is an N6-acetyllysine (lysine 366). Residues 368-384 (FLERFGERCQEHSKESP) are compositionally biased toward basic and acidic residues. The span at 391-401 (KTPNITPNTKA) shows a compositional bias: polar residues. A phosphothreonine mark is found at threonine 392 and threonine 396. Phosphoserine is present on residues serine 414 and serine 444. The interval 490–511 (NEPAVKLSSTEPAGSTESEMTK) is disordered. Positions 496–511 (LSSTEPAGSTESEMTK) are enriched in polar residues. Serine 513, serine 548, and serine 556 each carry phosphoserine. Residues 564-599 (FSDVLEEGELDVEKSQEEMDQVGAENSEEQEDALNI) are a coiled coil. The segment covering 623–635 (SPPSELRDSNLSA) has biased composition (polar residues). Residues 623–656 (SPPSELRDSNLSAASPKPGKFQRTRVPRAESADS) are disordered. Serine 637, serine 653, serine 656, and serine 659 each carry phosphoserine. Tyrosine 666 is subject to Phosphotyrosine. Phosphoserine is present on residues serine 673, serine 683, serine 787, and serine 924. The localization to the cleavage furrow stretch occupies residues 725 to 1121 (QQTVIYQASQ…DACYKPVGKP (397 aa)). The region spanning 980–1104 (AVEEKGFLTI…WMQKLNQVIV (125 aa)) is the PH domain.

As to quaternary structure, interacts with F-actin. Interacts with CD2AP. May interact with RHOA. Interacts with FZR1/CDH1 during mitotic exit. In terms of processing, phosphorylated during mitosis. Post-translationally, ubiquitinated, and this requires FZR1/CDH1.

The protein resides in the nucleus. It is found in the cytoplasm. The protein localises to the cytoskeleton. It localises to the cell cortex. Its subcellular location is the cell projection. The protein resides in the bleb. Functionally, required for cytokinesis. Essential for the structural integrity of the cleavage furrow and for completion of cleavage furrow ingression. Plays a role in bleb assembly during metaphase and anaphase of mitosis. May play a significant role in podocyte cell migration. The polypeptide is Anillin (Anln) (Mus musculus (Mouse)).